The following is a 333-amino-acid chain: NADH-quinone oxidoreductase subunit H (333 aa).

The next 8 membrane-spanning stretches (helical) occupy residues 15–35 (FFIF…FVTY), 88–108 (FILA…VIPF), 117–137 (IGVG…GVVT), 159–179 (ISYE…AGSL), 191–211 (VWYI…AVAE), 239–259 (WAFF…LITV), 274–296 (IPGA…WFRV), and 313–333 (VLLP…ELFF).

Belongs to the complex I subunit 1 family. NDH-1 is composed of 14 different subunits. Subunits NuoA, H, J, K, L, M, N constitute the membrane sector of the complex.

It localises to the cell membrane. It carries out the reaction a quinone + NADH + 5 H(+)(in) = a quinol + NAD(+) + 4 H(+)(out). In terms of biological role, NDH-1 shuttles electrons from NADH, via FMN and iron-sulfur (Fe-S) centers, to quinones in the respiratory chain. The immediate electron acceptor for the enzyme in this species is believed to be ubiquinone. Couples the redox reaction to proton translocation (for every two electrons transferred, four hydrogen ions are translocated across the cytoplasmic membrane), and thus conserves the redox energy in a proton gradient. This subunit may bind ubiquinone. This is NADH-quinone oxidoreductase subunit H from Bacillus thuringiensis subsp. konkukian (strain 97-27).